The sequence spans 357 residues: Isopentenyl-diphosphate delta-isomerase (357 aa).

13 to 14 (RK) provides a ligand contact to substrate. Residues S71, 72–74 (SMT), S102, and N131 contribute to the FMN site. 102–104 (SMR) is a binding site for substrate. Position 166 (Q166) interacts with substrate. Mg(2+) is bound at residue E167. FMN-binding positions include K198 and 311–312 (AR).

Belongs to the IPP isomerase type 2 family. As to quaternary structure, homooctamer. Dimer of tetramers. FMN serves as cofactor. NADPH is required as a cofactor. It depends on Mg(2+) as a cofactor.

The protein localises to the cytoplasm. The catalysed reaction is isopentenyl diphosphate = dimethylallyl diphosphate. Its function is as follows. Involved in the biosynthesis of isoprenoids. Catalyzes the 1,3-allylic rearrangement of the homoallylic substrate isopentenyl (IPP) to its allylic isomer, dimethylallyl diphosphate (DMAPP). The chain is Isopentenyl-diphosphate delta-isomerase from Chlorobium chlorochromatii (strain CaD3).